We begin with the raw amino-acid sequence, 284 residues long: Diaminopimelate epimerase (284 aa).

Residues N14 and N67 each contribute to the substrate site. The active-site Proton donor is the C76. Residues 77–78 (GN), N166, N199, and 217–218 (ER) each bind substrate. Catalysis depends on C226, which acts as the Proton acceptor. Substrate is bound at residue 227–228 (GT).

This sequence belongs to the diaminopimelate epimerase family. As to quaternary structure, homodimer.

The protein resides in the cytoplasm. The enzyme catalyses (2S,6S)-2,6-diaminopimelate = meso-2,6-diaminopimelate. Its pathway is amino-acid biosynthesis; L-lysine biosynthesis via DAP pathway; DL-2,6-diaminopimelate from LL-2,6-diaminopimelate: step 1/1. Its function is as follows. Catalyzes the stereoinversion of LL-2,6-diaminopimelate (L,L-DAP) to meso-diaminopimelate (meso-DAP), a precursor of L-lysine and an essential component of the bacterial peptidoglycan. This is Diaminopimelate epimerase from Bacillus subtilis (strain 168).